The primary structure comprises 403 residues: MINPLRGMKDLTFDEAQRFVHIVKTAITIAKRYGYSYIETPILEETALFKRSVGDSSDIVSKEMYQFEDKGGNDVCMRPEGTAGVVRAFISAKLDRQPVKQKFYYYGPMFRYERPQKGRLREFHQFGCESFGEASVYEDFTIIIMISQIFQALGIGFELKINSLGCPECMPPYRQNLVGFLTEISEDLCTDCNRRIGMNPIRVLDCKNEACQSLLKQSPKLIENLCEHCDTDFKKLTVLLDDAGIAYEVDTNLVRGLDYYNKTAFEFVSNEIGSQSAIAGGGRYDKLVEYLDGKPTPAVGFAIGIERIMELVQMPETKKEGYYMGAMIPEAIEKIIMLGNRKRATDKVTVEYSSKGFKSHMKGVDKANARYALLIGEDELKNGTVWLKDLETKEEKSILLSEV.

This sequence belongs to the class-II aminoacyl-tRNA synthetase family. As to quaternary structure, homodimer.

It is found in the cytoplasm. It catalyses the reaction tRNA(His) + L-histidine + ATP = L-histidyl-tRNA(His) + AMP + diphosphate + H(+). The chain is Histidine--tRNA ligase from Sulfurovum sp. (strain NBC37-1).